We begin with the raw amino-acid sequence, 291 residues long: Putative butyrophilin-like protein 10 pseudogene (291 aa).

The first 26 residues, 1-26 (MAVTCDPEAFLSICFVTLVFLQLPLA), serve as a signal peptide directing secretion. Positions 27-146 (SIWKADFDVT…GEATVQVQVA (120 aa)) constitute an Ig-like V-type domain. Over 27–254 (SIWKADFDVT…RSSQFTAWKA (228 aa)) the chain is Extracellular. Cys-54 and Cys-128 are joined by a disulfide. N-linked (GlcNAc...) asparagine glycosylation is present at Asn-59. Residues 255 to 275 (ALPLILVAMGLVIAGGICIFW) traverse the membrane as a helical segment. Over 276–291 (KRQREKNKASLEEERE) the chain is Cytoplasmic.

It belongs to the immunoglobulin superfamily. BTN/MOG family.

The protein localises to the membrane. This chain is Putative butyrophilin-like protein 10 pseudogene, found in Homo sapiens (Human).